Here is a 580-residue protein sequence, read N- to C-terminus: Tripeptidyl-peptidase sed5 (580 aa).

The disordered stretch occupies residues 1 to 21 (MYPLDGSARPHPPGTTRLNSV). In terms of domain architecture, Peptidase S53 spans 181–567 (RAQRLIVAEL…RRTLEELRRI (387 aa)). Asn236 carries an N-linked (GlcNAc...) asparagine glycan. Active-site charge relay system residues include Glu269, Asp273, and Ser479. Positions 523 and 524 each coordinate Ca(2+). A glycan (N-linked (GlcNAc...) asparagine) is linked at Asn529. Ca(2+) contacts are provided by Gly543, Gly545, and Asp547.

Requires Ca(2+) as cofactor.

The protein resides in the secreted. The protein localises to the extracellular space. The catalysed reaction is Release of an N-terminal tripeptide from a polypeptide.. In terms of biological role, secreted tripeptidyl-peptidase which degrades proteins at acidic pHs and is involved in virulence. The polypeptide is Tripeptidyl-peptidase sed5 (sed5) (Aspergillus fumigatus (strain ATCC MYA-4609 / CBS 101355 / FGSC A1100 / Af293) (Neosartorya fumigata)).